A 493-amino-acid polypeptide reads, in one-letter code: Angiopoietin-related protein 2 (493 aa).

The signal sequence occupies residues 1 to 19 (MRPLCMTYWWLGLLATVGA). 2 coiled-coil regions span residues 77–115 (EVHL…VDGG) and 152–202 (ALEL…QLEE). 2 N-linked (GlcNAc...) asparagine glycosylation sites follow: asparagine 164 and asparagine 192. Residues 269 to 489 (DKPSGPWRDC…KVVMMIRPNP (221 aa)) form the Fibrinogen C-terminal domain. 2 disulfide bridges follow: cysteine 278-cysteine 307 and cysteine 430-cysteine 443.

Widely expressed in heart, tongue, lung and skeletal muscle. Also found in lower levels in kidney, epididymis and testis.

Its subcellular location is the secreted. Functionally, induces sprouting in endothelial cells through an autocrine and paracrine action. The protein is Angiopoietin-related protein 2 (Angptl2) of Mus musculus (Mouse).